We begin with the raw amino-acid sequence, 419 residues long: uncharacterized protein (419 aa).

Residues 29–236 (PKFQDKIRIR…KLIELELKTI (208 aa)) enclose the Obg domain. The 178-residue stretch at 237–414 (CEIGLVGLPN…LVRGMTQLLQ (178 aa)) folds into the OBG-type G domain. GTP contacts are provided by residues 243–250 (GLPNAGKS), 295–299 (DIPGI), and 364–367 (ANKA).

It belongs to the TRAFAC class OBG-HflX-like GTPase superfamily. OBG GTPase family.

Its subcellular location is the mitochondrion. This is an uncharacterized protein from Schizosaccharomyces pombe (strain 972 / ATCC 24843) (Fission yeast).